A 355-amino-acid chain; its full sequence is UDP-3-O-acylglucosamine N-acyltransferase (355 aa).

The Proton acceptor role is filled by histidine 258.

It belongs to the transferase hexapeptide repeat family. LpxD subfamily. In terms of assembly, homotrimer.

The catalysed reaction is a UDP-3-O-[(3R)-3-hydroxyacyl]-alpha-D-glucosamine + a (3R)-hydroxyacyl-[ACP] = a UDP-2-N,3-O-bis[(3R)-3-hydroxyacyl]-alpha-D-glucosamine + holo-[ACP] + H(+). It functions in the pathway bacterial outer membrane biogenesis; LPS lipid A biosynthesis. In terms of biological role, catalyzes the N-acylation of UDP-3-O-acylglucosamine using 3-hydroxyacyl-ACP as the acyl donor. Is involved in the biosynthesis of lipid A, a phosphorylated glycolipid that anchors the lipopolysaccharide to the outer membrane of the cell. This chain is UDP-3-O-acylglucosamine N-acyltransferase, found in Bradyrhizobium diazoefficiens (strain JCM 10833 / BCRC 13528 / IAM 13628 / NBRC 14792 / USDA 110).